The chain runs to 360 residues: MINLFLFCRAGYEKECAAEIQHRAAELDIGGFVKTNKNDAYVIFQCFQAGDAAVLAQKIKLDSLIFARQMFAAKALLKNLPENDRITPIMEALSDVRNAGELRVETPDTDAAKERTTFCRKFTVPLRQKLKNSGNLLKKESSSRPIIHVCFVASGTAYVGFSFSNNSSPYPMGIPRLKMASDAPSRSTLKLDEAFIHFIPEEEKELRLSSGMNAVDLGACPGGWTYQLVRRGMFVAAIDNGAMDEGLMETGQVKHYQADGFRFEPPRKNIYWLVCDMIEKPSRVAELIEAWAINGWFKEAMFNLKLPMKSRYQDVTTILETMATVLKENEIKNFSIKCKHLYHDRDEVTVYLSLNPTQVS.

S-adenosyl-L-methionine-binding positions include Ser-187, 220–223 (CPGG), Asp-239, Asp-259, and Asp-276. The Proton acceptor role is filled by Lys-305.

Belongs to the class I-like SAM-binding methyltransferase superfamily. RNA methyltransferase RlmE family. RlmM subfamily. In terms of assembly, monomer.

It localises to the cytoplasm. The enzyme catalyses cytidine(2498) in 23S rRNA + S-adenosyl-L-methionine = 2'-O-methylcytidine(2498) in 23S rRNA + S-adenosyl-L-homocysteine + H(+). Catalyzes the 2'-O-methylation at nucleotide C2498 in 23S rRNA. The chain is Ribosomal RNA large subunit methyltransferase M from Shewanella sediminis (strain HAW-EB3).